The following is a 311-amino-acid chain: MKIAVLGAAGGIGQALALLLKLQLPAGSELSLYDIAPVTPGVAADVSHIPTAVKIQGFAGEDPIPALENADVVLISAGVARKPGMDRSDLFNINAGIVKNLIEKVAKTCPKACVGIITNPVNTTVAIAAEVLKKAGVYDKRKLFGVTTLDVLRSETFVAELKGLNVSRIAVPVIGGHSGVTILPLLSQVQYTEWKEDEIAPLTKRIQNAGTEVVEAKAGGGSATLSMAQAAARFALSLVQGLSGETVVECTYVEGDGKYARFFAQPVRLGKEGVEEILPVGTLSAFEQKALEDMLPTLRADIELGEKFVNN.

NAD(+)-binding positions include 7–13 (GAAGGIG) and D34. Residues R81 and R87 each contribute to the substrate site. Residues N94 and 117-119 (ITN) each bind NAD(+). Positions 119 and 153 each coordinate substrate. H177 (proton acceptor) is an active-site residue. M227 contacts NAD(+).

The protein belongs to the LDH/MDH superfamily. MDH type 1 family. In terms of assembly, homodimer.

The catalysed reaction is (S)-malate + NAD(+) = oxaloacetate + NADH + H(+). Catalyzes the reversible oxidation of malate to oxaloacetate. The chain is Malate dehydrogenase from Histophilus somni (strain 2336) (Haemophilus somnus).